The sequence spans 244 residues: Phosphoadenosine 5'-phosphosulfate reductase (244 aa).

Cysteine 239 serves as the catalytic Nucleophile; cysteine thiosulfonate intermediate.

The protein belongs to the PAPS reductase family. CysH subfamily.

The protein resides in the cytoplasm. It catalyses the reaction [thioredoxin]-disulfide + sulfite + adenosine 3',5'-bisphosphate + 2 H(+) = [thioredoxin]-dithiol + 3'-phosphoadenylyl sulfate. The protein operates within sulfur metabolism; hydrogen sulfide biosynthesis; sulfite from sulfate: step 3/3. Functionally, catalyzes the formation of sulfite from phosphoadenosine 5'-phosphosulfate (PAPS) using thioredoxin as an electron donor. In Salmonella heidelberg (strain SL476), this protein is Phosphoadenosine 5'-phosphosulfate reductase.